Consider the following 396-residue polypeptide: Putative cytochrome P450 YjiB (396 aa).

Cysteine 349 contacts heme.

Belongs to the cytochrome P450 family. Heme serves as cofactor.

The chain is Putative cytochrome P450 YjiB (yjiB) from Bacillus subtilis (strain 168).